The primary structure comprises 1985 residues: Voltage-dependent L-type calcium channel subunit alpha-1F (1985 aa).

Basic and acidic residues predominate over residues methionine 1–threonine 11. The tract at residues methionine 1–lysine 56 is disordered. The Cytoplasmic segment spans residues methionine 1–lysine 92. The stretch at asparagine 79–phenylalanine 375 is one I repeat. A helical transmembrane segment spans residues proline 93–valine 111. At tyrosine 112–glutamine 129 the chain is on the extracellular side. Residues valine 130 to tyrosine 149 form a helical membrane-spanning segment. The Cytoplasmic segment spans residues glycine 150–asparagine 161. Residues glycine 162–leucine 180 form a helical membrane-spanning segment. The Extracellular segment spans residues glutamate 181–aspartate 201. A helical transmembrane segment spans residues valine 202–valine 220. At proline 221 to histidine 239 the chain is on the cytoplasmic side. The helical transmembrane segment at isoleucine 240–phenylalanine 259 threads the bilayer. The Extracellular segment spans residues leucine 260 to leucine 347. The N-linked (GlcNAc...) asparagine glycan is linked to asparagine 295. Glutamate 330 serves as a coordination point for Ca(2+). A helical membrane pass occupies residues proline 348–serine 372. The Cytoplasmic segment spans residues glycine 373–asparagine 529. Residues glutamine 395–glutamate 412 form a binding to the beta subunit region. Over residues serine 455–serine 469 the composition is skewed to low complexity. Positions serine 455–glycine 490 are disordered. The II repeat unit spans residues asparagine 515–leucine 761. Residues alanine 530–glutamate 549 traverse the membrane as a helical segment. The Extracellular segment spans residues histidine 550–alanine 564. The chain crosses the membrane as a helical span at residues asparagine 565–leucine 583. Over glycine 584–serine 591 the chain is Cytoplasmic. A helical membrane pass occupies residues phenylalanine 592–leucine 610. Residues valine 611–glycine 620 are Extracellular-facing. Residues isoleucine 621–tryptophan 639 traverse the membrane as a helical segment. Topologically, residues alanine 640–serine 658 are cytoplasmic. Residues leucine 659–glycine 679 form a helical membrane-spanning segment. The Extracellular segment spans residues glycine 680–leucine 733. Glutamate 711 provides a ligand contact to Ca(2+). A helical membrane pass occupies residues valine 734–valine 758. Residues aspartate 759–histidine 876 lie on the Cytoplasmic side of the membrane. The interval alanine 766–histidine 834 is disordered. Basic and acidic residues predominate over residues threonine 768–lysine 787. Residues methionine 810 to asparagine 830 show a composition bias toward acidic residues. One copy of the III repeat lies at cysteine 858 to phenylalanine 1140. The helical transmembrane segment at isoleucine 877–alanine 895 threads the bilayer. The Extracellular segment spans residues glutamate 896 to tyrosine 911. The helical transmembrane segment at phenylalanine 912–phenylalanine 931 threads the bilayer. Residues glycine 932 to serine 943 lie on the Cytoplasmic side of the membrane. A helical transmembrane segment spans residues tryptophan 944 to isoleucine 962. Residues histidine 963 to serine 968 lie on the Extracellular side of the membrane. The chain crosses the membrane as a helical span at residues valine 969–alanine 988. The Cytoplasmic segment spans residues lysine 989–asparagine 1007. The helical transmembrane segment at isoleucine 1008–phenylalanine 1027 threads the bilayer. Over lysine 1028 to glutamate 1117 the chain is Extracellular. Residues arginine 1065–asparagine 1155 are dihydropyridine binding. A Ca(2+)-binding site is contributed by glutamate 1091. Residues isoleucine 1118 to valine 1138 form a helical membrane-spanning segment. Residues glycine 1139–arginine 1195 lie on the Cytoplasmic side of the membrane. The IV repeat unit spans residues asparagine 1182–phenylalanine 1449. The helical transmembrane segment at alanine 1196–methionine 1214 threads the bilayer. Over glutamine 1215–isoleucine 1229 the chain is Extracellular. A helical transmembrane segment spans residues leucine 1230–phenylalanine 1249. At lysine 1250–alanine 1256 the chain is on the cytoplasmic side. A helical transmembrane segment spans residues aspartate 1257–glutamate 1278. The Extracellular portion of the chain corresponds to valine 1279–isoleucine 1295. Residues serine 1296–glycine 1315 traverse the membrane as a helical segment. The Cytoplasmic segment spans residues glutamate 1316–tyrosine 1334. Residues valine 1335 to phenylalanine 1354 traverse the membrane as a helical segment. The Extracellular portion of the chain corresponds to glycine 1355–phenylalanine 1421. The tract at residues arginine 1402–lysine 1468 is dihydropyridine binding. The interval glutamate 1414 to serine 1457 is phenylalkylamine binding. A helical transmembrane segment spans residues alanine 1422–methionine 1446. Topologically, residues aspartate 1447 to valine 1982 are cytoplasmic. Disordered stretches follow at residues valine 1643–arginine 1729 and leucine 1746–proline 1778. Positions threonine 1644–asparagine 1665 are enriched in acidic residues. Composition is skewed to polar residues over residues aspartate 1675–serine 1687 and asparagine 1713–serine 1724. The span at aspartate 1767–phenylalanine 1776 shows a compositional bias: basic and acidic residues.

This sequence belongs to the calcium channel alpha-1 subunit (TC 1.A.1.11) family. CACNA1F subfamily. Voltage-dependent calcium channels are multisubunit complexes, consisting of alpha-1, alpha-2, beta and delta subunits in a 1:1:1:1 ratio. The channel activity is directed by the pore-forming and voltage-sensitive alpha-1 subunit. In many cases, this subunit is sufficient to generate voltage-sensitive calcium channel activity. The auxiliary subunits beta and alpha-2/delta linked by a disulfide bridge regulate the channel activity. Interacts (via IQ domain) with CABP4; in a calcium independent manner. In terms of tissue distribution, expressed in the inner and outer nuclear layers and the genglion cell layer of the retina.

Its subcellular location is the membrane. It carries out the reaction Ca(2+)(in) = Ca(2+)(out). Functionally, voltage-sensitive calcium channels (VSCC) mediate the entry of calcium ions into excitable cells and are also involved in a variety of calcium-dependent processes, including muscle contraction, hormone or neurotransmitter release, gene expression, cell motility, cell division and cell death. The isoform alpha-1F gives rise to L-type calcium currents. Long-lasting (L-type) calcium channels belong to the 'high-voltage activated' (HVA) group. They are blocked by dihydropyridines (DHP), phenylalkylamines, and by benzothiazepines. Activates at more negative voltages and does not undergo calcium-dependent inactivation (CDI), due to incoming calcium ions, during depolarization. This is Voltage-dependent L-type calcium channel subunit alpha-1F from Mus musculus (Mouse).